The primary structure comprises 310 residues: tRNA dimethylallyltransferase (310 aa).

Residue 19–26 (GPTGTGKS) participates in ATP binding. Residue 21–26 (TGTGKS) participates in substrate binding.

This sequence belongs to the IPP transferase family. As to quaternary structure, monomer. Mg(2+) is required as a cofactor.

It carries out the reaction adenosine(37) in tRNA + dimethylallyl diphosphate = N(6)-dimethylallyladenosine(37) in tRNA + diphosphate. Its function is as follows. Catalyzes the transfer of a dimethylallyl group onto the adenine at position 37 in tRNAs that read codons beginning with uridine, leading to the formation of N6-(dimethylallyl)adenosine (i(6)A). In Saccharopolyspora erythraea (strain ATCC 11635 / DSM 40517 / JCM 4748 / NBRC 13426 / NCIMB 8594 / NRRL 2338), this protein is tRNA dimethylallyltransferase.